Reading from the N-terminus, the 274-residue chain is 4-diphosphocytidyl-2-C-methyl-D-erythritol kinase (274 aa).

The active site involves Lys8. Pro92 to Ser102 is a binding site for ATP. The active site involves Asp134.

Belongs to the GHMP kinase family. IspE subfamily.

The catalysed reaction is 4-CDP-2-C-methyl-D-erythritol + ATP = 4-CDP-2-C-methyl-D-erythritol 2-phosphate + ADP + H(+). It participates in isoprenoid biosynthesis; isopentenyl diphosphate biosynthesis via DXP pathway; isopentenyl diphosphate from 1-deoxy-D-xylulose 5-phosphate: step 3/6. In terms of biological role, catalyzes the phosphorylation of the position 2 hydroxy group of 4-diphosphocytidyl-2C-methyl-D-erythritol. The sequence is that of 4-diphosphocytidyl-2-C-methyl-D-erythritol kinase from Porphyromonas gingivalis (strain ATCC 33277 / DSM 20709 / CIP 103683 / JCM 12257 / NCTC 11834 / 2561).